The following is a 77-amino-acid chain: Conotoxin King-Kong 2 (77 aa).

An N-terminal signal peptide occupies residues 1 to 22 (MKLTCMMIVAVLFLTAWTFVTA). Positions 23-49 (DDSGNGLENLFSKAHHEMKNPEASNLN) are excised as a propeptide. Cystine bridges form between C52/C67, C59/C71, and C66/C76. Residue C76 is modified to Cysteine amide.

The protein belongs to the conotoxin O1 superfamily. As to expression, expressed by the venom duct.

It localises to the secreted. This Conus textile (Cloth-of-gold cone) protein is Conotoxin King-Kong 2.